We begin with the raw amino-acid sequence, 691 residues long: DNA-directed RNA polymerase subunit beta' (691 aa).

Residues Cys76, Cys78, Cys94, and Cys97 each contribute to the Zn(2+) site. Residues Asp496, Asp498, and Asp500 each coordinate Mg(2+).

This sequence belongs to the RNA polymerase beta' chain family. RpoC1 subfamily. Mg(2+) serves as cofactor. Requires Zn(2+) as cofactor.

It is found in the plastid. The catalysed reaction is RNA(n) + a ribonucleoside 5'-triphosphate = RNA(n+1) + diphosphate. In terms of biological role, DNA-dependent RNA polymerase catalyzes the transcription of DNA into RNA using the four ribonucleoside triphosphates as substrates. The chain is DNA-directed RNA polymerase subunit beta' from Cuscuta exaltata (Tall dodder).